A 432-amino-acid chain; its full sequence is MAAAVRAAGCLPALCSLQAGHFLSRQLSLNAFPVAATSFLAVKTALSHGSLSSRETRRNHCLTSLSHVLQTQCCVSSPGNWTGQQCRPYSFFTKLTAEELWKGALAETGAGARKGRGKRTKKKKRKDLNRGQIIGEGRSGFLWPGLNVPLIKSGVVQNIGQRSKEEQQKVEATMVEQREEWDRKRKIKVKRERGWSGNTWGGVSIGPPDPGPNGETYEDFDTRILEVRNVFNMTAKEGRKKSVRVLVAVGNGNGAAGFAIGKAADRGDAFRKAKNRAIHYLHYIERYEGHTIFHDISLRFKRTQIRMKKQPRGYGLRCHRAIITICRLIGIKDMYARVTGSMNMLNLTRGLFHGLARQETHQHLADKKGLHVVEFREECGPLPIVVASPHGALSKEPEPEPEVPDTKLDWQDVKAMQGLKRSVWFNLKRPAT.

The interval 110–130 is disordered; it reads AGARKGRGKRTKKKKRKDLNR. Residues 113–127 are compositionally biased toward basic residues; the sequence is RKGRGKRTKKKKRKD. The region spanning 220–284 is the S5 DRBM domain; it reads FDTRILEVRN…NRAIHYLHYI (65 aa).

Belongs to the universal ribosomal protein uS5 family. As to quaternary structure, component of the mitochondrial ribosome small subunit (28S) which comprises a 12S rRNA and about 30 distinct proteins.

It is found in the mitochondrion. The sequence is that of Small ribosomal subunit protein uS5m (Mrps5) from Mus musculus (Mouse).